The chain runs to 579 residues: Rhoptry surface protein CERLI2 (579 aa).

The C2 domain occupies 52–84; it reads LHNYRTFYLLIKINEIFNINKYKQIYIIVNTDK. Repeat copies occupy residues 442–451, 452–461, 462–471, 472–481, 482–491, 492–501, 502–511, 522–531, 532–541, 542–551, and 552–561. The segment at 442–561 is 12 X 10 AA tandem repeat of Q-T-E-I-[K/N]-N-D-[H/N/I][I/N]; sequence QTDEIKNDNI…QTDEIKNDIN (120 aa).

It localises to the cytoplasmic vesicle. The protein localises to the secretory vesicle. The protein resides in the rhoptry membrane. It is found in the cell membrane. Its subcellular location is the host cell membrane. In terms of biological role, plays an important role in rhoptry physiology and thus is essential for merozoite invasion of host erythrocytes. This is Rhoptry surface protein CERLI2 from Plasmodium falciparum (isolate 3D7).